A 95-amino-acid chain; its full sequence is Co-chaperonin GroES (95 aa).

Over residues 12–22 (VKPSPAEEKTK) the composition is skewed to basic and acidic residues. The interval 12–38 (VKPSPAEEKTKGGLYIPDSGKEKPQHG) is disordered.

This sequence belongs to the GroES chaperonin family. Heptamer of 7 subunits arranged in a ring. Interacts with the chaperonin GroEL.

It localises to the cytoplasm. Together with the chaperonin GroEL, plays an essential role in assisting protein folding. The GroEL-GroES system forms a nano-cage that allows encapsulation of the non-native substrate proteins and provides a physical environment optimized to promote and accelerate protein folding. GroES binds to the apical surface of the GroEL ring, thereby capping the opening of the GroEL channel. The protein is Co-chaperonin GroES of Chloroherpeton thalassium (strain ATCC 35110 / GB-78).